Consider the following 426-residue polypeptide: Glutamate-1-semialdehyde 2,1-aminomutase (426 aa).

Lysine 265 bears the N6-(pyridoxal phosphate)lysine mark.

This sequence belongs to the class-III pyridoxal-phosphate-dependent aminotransferase family. HemL subfamily. Homodimer. Pyridoxal 5'-phosphate serves as cofactor.

It localises to the cytoplasm. It catalyses the reaction (S)-4-amino-5-oxopentanoate = 5-aminolevulinate. The protein operates within porphyrin-containing compound metabolism; protoporphyrin-IX biosynthesis; 5-aminolevulinate from L-glutamyl-tRNA(Glu): step 2/2. The polypeptide is Glutamate-1-semialdehyde 2,1-aminomutase (Paraburkholderia phymatum (strain DSM 17167 / CIP 108236 / LMG 21445 / STM815) (Burkholderia phymatum)).